We begin with the raw amino-acid sequence, 884 residues long: E3 ubiquitin-protein ligase BRE1-like 1 (884 aa).

Positions 1-37 (MGSTGEPDRKRRLSSSVAPGGGAPVSPAKRLAVAPTS) are disordered. Positions 49–86 (YKNQKLSEQLEAHKFEYRALENKFAGLKEKQRTHNETL) form a coiled coil. The tract at residues 107–127 (KSGSPNSSPGSGHNNVQKDGT) is disordered. Residues 108–121 (SGSPNSSPGSGHNN) are compositionally biased toward low complexity. Coiled coils occupy residues 216 to 541 (LNNV…ELKL), 580 to 663 (SKLE…LQQI), 696 to 762 (RNLQ…QSLD), and 789 to 827 (KKRI…KEYR). The RING-type zinc finger occupies 832 to 871 (CGICHDRQKEVVITKCYHLFCNQCIQKSLGNRQRRCPSCS).

It belongs to the BRE1 family. In terms of assembly, interacts with SKIPA. Interacts with HUB2.

The protein localises to the nucleus. It carries out the reaction S-ubiquitinyl-[E2 ubiquitin-conjugating enzyme]-L-cysteine + [acceptor protein]-L-lysine = [E2 ubiquitin-conjugating enzyme]-L-cysteine + N(6)-ubiquitinyl-[acceptor protein]-L-lysine.. It participates in protein modification; protein ubiquitination. E3 ubiquitin-protein ligase that monoubiquitinates H2B to form H2BK143ub1. H2BK143ub1 gives a specific tag for epigenetic transcriptional activation and is a prerequisite for H3 Lys-4 methylation (H3K4me). It thereby plays a central role in histone code and gene regulation. H2B monoubiquitination (H2BK143ub1), mediated by HUB1, modulates transcriptional regulation of anther development, likely by promoting histone H3K4 dimethylation (H3K4me2) in the chromatin of the key tapetum degradation-related genes C4, CP1 and UDT1. This is E3 ubiquitin-protein ligase BRE1-like 1 from Oryza sativa subsp. japonica (Rice).